The following is an 818-amino-acid chain: Glycerol-3-phosphate acyltransferase (818 aa).

An HXXXXD motif motif is present at residues 308–313 (CHRSHM).

It belongs to the GPAT/DAPAT family.

The protein resides in the cell inner membrane. The catalysed reaction is sn-glycerol 3-phosphate + an acyl-CoA = a 1-acyl-sn-glycero-3-phosphate + CoA. It participates in phospholipid metabolism; CDP-diacylglycerol biosynthesis; CDP-diacylglycerol from sn-glycerol 3-phosphate: step 1/3. This is Glycerol-3-phosphate acyltransferase from Alteromonas mediterranea (strain DSM 17117 / CIP 110805 / LMG 28347 / Deep ecotype).